The chain runs to 584 residues: Arginine--tRNA ligase (584 aa).

The 'HIGH' region signature appears at 129–139 (ANPTGPLHVGH).

The protein belongs to the class-I aminoacyl-tRNA synthetase family. As to quaternary structure, monomer.

Its subcellular location is the cytoplasm. The enzyme catalyses tRNA(Arg) + L-arginine + ATP = L-arginyl-tRNA(Arg) + AMP + diphosphate. In Halorhodospira halophila (strain DSM 244 / SL1) (Ectothiorhodospira halophila (strain DSM 244 / SL1)), this protein is Arginine--tRNA ligase.